The chain runs to 288 residues: Stress response protein YhaX (288 aa).

The protein is Stress response protein YhaX (yhaX) of Bacillus subtilis (strain 168).